Consider the following 150-residue polypeptide: UPF0098 protein CPn_0877/CP_0992/CPj0877/CpB0906 (150 aa).

The protein belongs to the UPF0098 family.

The sequence is that of UPF0098 protein CPn_0877/CP_0992/CPj0877/CpB0906 from Chlamydia pneumoniae (Chlamydophila pneumoniae).